Reading from the N-terminus, the 246-residue chain is DNA repair protein RecO (246 aa).

It belongs to the RecO family.

In terms of biological role, involved in DNA repair and RecF pathway recombination. The sequence is that of DNA repair protein RecO from Proteus mirabilis (strain HI4320).